Consider the following 440-residue polypeptide: Trigger factor (440 aa).

Residues 163–248 (GMVLTVDFSF…LKEIKKKELP (86 aa)) enclose the PPIase FKBP-type domain.

The protein belongs to the FKBP-type PPIase family. Tig subfamily.

The protein localises to the cytoplasm. It catalyses the reaction [protein]-peptidylproline (omega=180) = [protein]-peptidylproline (omega=0). Functionally, involved in protein export. Acts as a chaperone by maintaining the newly synthesized protein in an open conformation. Functions as a peptidyl-prolyl cis-trans isomerase. This Trichlorobacter lovleyi (strain ATCC BAA-1151 / DSM 17278 / SZ) (Geobacter lovleyi) protein is Trigger factor.